A 159-amino-acid polypeptide reads, in one-letter code: NAD(P)H-quinone oxidoreductase subunit J, chloroplastic (159 aa).

It belongs to the complex I 30 kDa subunit family. In terms of assembly, NDH is composed of at least 16 different subunits, 5 of which are encoded in the nucleus.

Its subcellular location is the plastid. It is found in the chloroplast thylakoid membrane. It catalyses the reaction a plastoquinone + NADH + (n+1) H(+)(in) = a plastoquinol + NAD(+) + n H(+)(out). The catalysed reaction is a plastoquinone + NADPH + (n+1) H(+)(in) = a plastoquinol + NADP(+) + n H(+)(out). Its function is as follows. NDH shuttles electrons from NAD(P)H:plastoquinone, via FMN and iron-sulfur (Fe-S) centers, to quinones in the photosynthetic chain and possibly in a chloroplast respiratory chain. The immediate electron acceptor for the enzyme in this species is believed to be plastoquinone. Couples the redox reaction to proton translocation, and thus conserves the redox energy in a proton gradient. In Oryza nivara (Indian wild rice), this protein is NAD(P)H-quinone oxidoreductase subunit J, chloroplastic.